A 177-amino-acid polypeptide reads, in one-letter code: VQ motif-containing protein 11 (177 aa).

The VQ motif lies at 25 to 34 (FRNIVQKLTG). Ser-43, Ser-99, Ser-115, Ser-142, and Ser-145 each carry phosphoserine. Residues 115–133 (SAREEHHAQPDKEEQKAIA) show a composition bias toward basic and acidic residues. Residues 115 to 177 (SAREEHHAQP…RIHEDNHRDS (63 aa)) form a disordered region. Positions 148-159 (EPAPELLPLFPL) are enriched in low complexity. Ser-161 is modified (phosphoserine). A compositionally biased stretch (basic and acidic residues) spans 168–177 (RIHEDNHRDS).

Post-translationally, phosphorylated on serine residues by MPK6.

It is found in the nucleus. Its function is as follows. May modulate WRKY transcription factor activities. The sequence is that of VQ motif-containing protein 11 from Arabidopsis thaliana (Mouse-ear cress).